The sequence spans 185 residues: Regulator of rDNA transcription protein 13 (185 aa).

WD repeat units lie at residues 9-48 (GHTD…NNGE), 71-108 (GHRA…LKHF), and 111-148 (HTQL…LVRS).

In terms of biological role, may be involved in the modulation of rDNA transcription. This chain is Regulator of rDNA transcription protein 13 (RRT13), found in Saccharomyces cerevisiae (strain ATCC 204508 / S288c) (Baker's yeast).